We begin with the raw amino-acid sequence, 238 residues long: UPF0758 protein Dtpsy_2777 (238 aa).

An MPN domain is found at 116-238 (VFDSPQAVQH…ALSMAEQGLV (123 aa)). Zn(2+) contacts are provided by histidine 187, histidine 189, and aspartate 200. Positions 187 to 200 (HNHPSGSVQPSRAD) match the JAMM motif motif.

This sequence belongs to the UPF0758 family.

This is UPF0758 protein Dtpsy_2777 from Acidovorax ebreus (strain TPSY) (Diaphorobacter sp. (strain TPSY)).